The chain runs to 167 residues: MSTPIRILGIDPGLRHTGWGVIEQSGARLVHIAHGVIDPPTDLSMAERLGHIFEAVGELARHHAPHAAGVEETLVNANPRSALKLGQARGAAMAALAMAGVSVAEFAPRQIKLSVVGTGTADKDQVKFMVQRLLPRAGEMKLDAADALACAICAAHHLPLQMKRGAA.

Active-site residues include Asp-11, Glu-71, and Asp-143. Positions 11, 71, and 143 each coordinate Mg(2+).

It belongs to the RuvC family. In terms of assembly, homodimer which binds Holliday junction (HJ) DNA. The HJ becomes 2-fold symmetrical on binding to RuvC with unstacked arms; it has a different conformation from HJ DNA in complex with RuvA. In the full resolvosome a probable DNA-RuvA(4)-RuvB(12)-RuvC(2) complex forms which resolves the HJ. The cofactor is Mg(2+).

The protein resides in the cytoplasm. It carries out the reaction Endonucleolytic cleavage at a junction such as a reciprocal single-stranded crossover between two homologous DNA duplexes (Holliday junction).. Functionally, the RuvA-RuvB-RuvC complex processes Holliday junction (HJ) DNA during genetic recombination and DNA repair. Endonuclease that resolves HJ intermediates. Cleaves cruciform DNA by making single-stranded nicks across the HJ at symmetrical positions within the homologous arms, yielding a 5'-phosphate and a 3'-hydroxyl group; requires a central core of homology in the junction. The consensus cleavage sequence is 5'-(A/T)TT(C/G)-3'. Cleavage occurs on the 3'-side of the TT dinucleotide at the point of strand exchange. HJ branch migration catalyzed by RuvA-RuvB allows RuvC to scan DNA until it finds its consensus sequence, where it cleaves and resolves the cruciform DNA. The sequence is that of Crossover junction endodeoxyribonuclease RuvC from Hyphomonas neptunium (strain ATCC 15444).